We begin with the raw amino-acid sequence, 344 residues long: Palmitoyltransferase ZDHHC4 (344 aa).

Residues 1–2 are Lumenal-facing; it reads MD. A helical membrane pass occupies residues 3–23; that stretch reads FLVLFLFYLASVLMGLVLICV. The Cytoplasmic portion of the chain corresponds to 24 to 67; that stretch reads CSKTHSLKGLARGGAQIFSCIIPECLQRAVHGLLHYLFHTRNHT. The helical transmembrane segment at 68 to 88 threads the bilayer; that stretch reads FIVLHLVLQGMVYTEYTWEVF. Residues 89 to 99 lie on the Lumenal side of the membrane; the sequence is GYCQELELSLH. The chain crosses the membrane as a helical span at residues 100–120; it reads YLLLPYLLLGVNLFFFTLTCG. At 121 to 192 the chain is on the cytoplasmic side; that stretch reads TNPGIITKAN…NNCIGAWNIR (72 aa). The 51-residue stretch at 149-199 folds into the DHHC domain; sequence VRCSTCDLRKPARSKHCSVCNWCVHRFDHHCVWVNNCIGAWNIRYFLIYVL. C179 serves as the catalytic S-palmitoyl cysteine intermediate. Residues 193-213 traverse the membrane as a helical segment; that stretch reads YFLIYVLTLTASAATVAIVST. Topologically, residues 214-255 are lumenal; sequence TFLVHLVVMSDLYQETYIDDLGHLHVMDTVFLIQYLFLTFPR. A helical transmembrane segment spans residues 256-276; the sequence is IVFMLGFVVVLSFLLGGYLLF. Topologically, residues 277–344 are cytoplasmic; sequence VLYLAATNQT…FPCHERKKQE (68 aa). The Di-lysine motif motif lies at 341 to 344; it reads KKQE.

Belongs to the DHHC palmitoyltransferase family. As to quaternary structure, interacts with CPT1A.

Its subcellular location is the endoplasmic reticulum membrane. The protein localises to the golgi apparatus membrane. The protein resides in the cell membrane. The enzyme catalyses L-cysteinyl-[protein] + hexadecanoyl-CoA = S-hexadecanoyl-L-cysteinyl-[protein] + CoA. Palmitoyltransferase that catalyzes the addition of palmitate onto protein substrates including the D(2) dopamine receptor DRD2, GSK3B or MAVS. Mediates GSK3B palmitoylation to prevent its AKT1-mediated phosphorylation leading to activation of the STAT3 signaling pathway. Also catalyzes MAVS palmitoylation which promotes its stabilization and activation by inhibiting 'Lys-48'- but facilitating 'Lys-63'-linked ubiquitination. The protein is Palmitoyltransferase ZDHHC4 of Homo sapiens (Human).